The following is a 156-amino-acid chain: Small ribosomal subunit protein uS7 (156 aa).

The protein belongs to the universal ribosomal protein uS7 family. Part of the 30S ribosomal subunit. Contacts proteins S9 and S11.

In terms of biological role, one of the primary rRNA binding proteins, it binds directly to 16S rRNA where it nucleates assembly of the head domain of the 30S subunit. Is located at the subunit interface close to the decoding center, probably blocks exit of the E-site tRNA. This is Small ribosomal subunit protein uS7 from Cronobacter sakazakii (strain ATCC BAA-894) (Enterobacter sakazakii).